Consider the following 131-residue polypeptide: Profilin-3 (131 aa).

Belongs to the profilin family. As to quaternary structure, occurs in many kinds of cells as a complex with monomeric actin in a 1:1 ratio.

The protein localises to the cytoplasm. The protein resides in the cytoskeleton. Functionally, binds to actin and affects the structure of the cytoskeleton. At high concentrations, profilin prevents the polymerization of actin, whereas it enhances it at low concentrations. By binding to PIP2, it inhibits the formation of IP3 and DG. In Triticum aestivum (Wheat), this protein is Profilin-3 (PRO3).